The sequence spans 184 residues: Leucine-rich repeat-containing protein 20 (184 aa).

LRR repeat units lie at residues 51-72, 75-96, 98-120, 121-141, and 145-167; these read QIHL…FMTT, QLRE…VSAL, HLKA…TALP, ALET…EKLA, and ALRS…APPL. S175 bears the Phosphoserine mark.

This is Leucine-rich repeat-containing protein 20 (LRRC20) from Homo sapiens (Human).